A 448-amino-acid polypeptide reads, in one-letter code: Probable metal transport system membrane protein CPn_0347/CP_0413/CPj0347/CpB0354 (448 aa).

The next 8 membrane-spanning stretches (helical) occupy residues 15 to 35, 47 to 67, 69 to 89, 100 to 120, 144 to 164, 193 to 213, 233 to 253, and 270 to 290; these read FLAVTLICMTTALWGTILLIS, ASYPGLLVGALMAQYVFSLQA, IFWIVLFGCAASVFGYGIIVF, SALCFVLVVFFAIGVILASYV, FLEATLAAIVFCASLFALWWW, LIFISLVIVSGVRSVGIVLIS, ILILSAFFGGISGALGSYISV, and LPTGPLVVICAGLLAGLCLLF.

It belongs to the ABC-3 integral membrane protein family.

It localises to the cell inner membrane. In terms of biological role, part of an ATP-driven transport system CPn_0346/CPn_0347/CPn_0348/CPn_0349 for a metal. The protein is Probable metal transport system membrane protein CPn_0347/CP_0413/CPj0347/CpB0354 of Chlamydia pneumoniae (Chlamydophila pneumoniae).